Reading from the N-terminus, the 400-residue chain is Nicotinate phosphoribosyltransferase (400 aa).

H220 carries the phosphohistidine; by autocatalysis modification.

The protein belongs to the NAPRTase family. Post-translationally, transiently phosphorylated on a His residue during the reaction cycle. Phosphorylation strongly increases the affinity for substrates and increases the rate of nicotinate D-ribonucleotide production. Dephosphorylation regenerates the low-affinity form of the enzyme, leading to product release.

The catalysed reaction is nicotinate + 5-phospho-alpha-D-ribose 1-diphosphate + ATP + H2O = nicotinate beta-D-ribonucleotide + ADP + phosphate + diphosphate. It functions in the pathway cofactor biosynthesis; NAD(+) biosynthesis; nicotinate D-ribonucleotide from nicotinate: step 1/1. Catalyzes the synthesis of beta-nicotinate D-ribonucleotide from nicotinate and 5-phospho-D-ribose 1-phosphate at the expense of ATP. The chain is Nicotinate phosphoribosyltransferase from Citrobacter koseri (strain ATCC BAA-895 / CDC 4225-83 / SGSC4696).